We begin with the raw amino-acid sequence, 292 residues long: Protease HtpX homolog (292 aa).

The next 2 helical transmembrane spans lie at 7-27 and 29-49; these read TFILMAALTALVMGMGGLIGG and GGAVIALAIAGAGNLFAWWNS. Residue H131 participates in Zn(2+) binding. Residue E132 is part of the active site. H135 is a binding site for Zn(2+). 2 helical membrane passes run 148 to 168 and 178 to 198; these read ATMAGAIAMLGNMLMFSSMFG and LAAILAMIFAPMAAGLVQMAI. E203 contacts Zn(2+).

The protein belongs to the peptidase M48B family. Zn(2+) serves as cofactor.

It is found in the cell inner membrane. This Paracoccus denitrificans (strain Pd 1222) protein is Protease HtpX homolog.